The chain runs to 310 residues: Putative carboxypeptidase SCO6489 (310 aa).

Catalysis depends on S116, which acts as the Nucleophile. Catalysis depends on charge relay system residues E212 and H277.

This sequence belongs to the peptidase S66 family.

The chain is Putative carboxypeptidase SCO6489 from Streptomyces coelicolor (strain ATCC BAA-471 / A3(2) / M145).